We begin with the raw amino-acid sequence, 488 residues long: Katanin p60 ATPase-containing subunit A-like 1 (488 aa).

Methionine 1 carries the post-translational modification N-acetylmethionine. The tract at residues 95-179 is disordered; it reads DPAVWPPPVP…GASDSEIPKF (85 aa). The span at 116–127 shows a compositional bias: basic and acidic residues; it reads PNREVRPLRKDV. A compositionally biased stretch (low complexity) spans 128–138; the sequence is GAGARGLVGRA. Residues 142–167 show a composition bias toward basic and acidic residues; sequence SKSDKPASRDKDYRARGRDDKARKNV. Serine 172 bears the Phosphoserine mark. 246 to 253 is a binding site for ATP; it reads GPPGTGKT.

It belongs to the AAA ATPase family. Katanin p60 subunit A1 subfamily. A-like 1 sub-subfamily. Interacts with KATNB1 and KATNBL1. In terms of tissue distribution, widely expressed, including in testis, brain, heart, lung, kidney, liver, spleen, seminal vesicles and ovary. In testis, restricted to Sertoli cells within the seminiferous epithelium (at protein level).

Its subcellular location is the cytoplasm. The protein localises to the cytoskeleton. The protein resides in the spindle pole. It localises to the spindle. It catalyses the reaction n ATP + n H2O + a microtubule = n ADP + n phosphate + (n+1) alpha/beta tubulin heterodimers.. Regulates microtubule dynamics in Sertoli cells, a process that is essential for spermiogenesis and male fertility. Severs microtubules in an ATP-dependent manner, promoting rapid reorganization of cellular microtubule arrays. Has microtubule-severing activity in vitro. In Mus musculus (Mouse), this protein is Katanin p60 ATPase-containing subunit A-like 1 (Katnal1).